The sequence spans 311 residues: Ribonuclease HIII (311 aa).

One can recognise an RNase H type-2 domain in the interval Met95–Lys311. The a divalent metal cation site is built by Asp101, Glu102, and Asp206.

It belongs to the RNase HII family. RnhC subfamily. Mn(2+) is required as a cofactor. Requires Mg(2+) as cofactor.

It is found in the cytoplasm. The enzyme catalyses Endonucleolytic cleavage to 5'-phosphomonoester.. Functionally, endonuclease that specifically degrades the RNA of RNA-DNA hybrids. The chain is Ribonuclease HIII from Bacillus thuringiensis subsp. konkukian (strain 97-27).